Reading from the N-terminus, the 709-residue chain is Copper amine oxidase vicK1 (709 aa).

An N-terminal signal peptide occupies residues 1 to 20; it reads MKLFLLFTLTLVNIFSVSLQ. D365 acts as the Proton acceptor in catalysis. C383 and C408 are joined by a disulfide. Y448 acts as the Schiff-base intermediate with substrate; via topaquinone in catalysis. Y448 bears the 2',4',5'-topaquinone mark. Cu cation-binding residues include H496 and H498. Residues D505, L506, D507, E548, F641, E645, D651, and L652 each contribute to the Ca(2+) site. H662 serves as a coordination point for Cu cation.

It belongs to the copper/topaquinone oxidase family. As to quaternary structure, homodimer; disulfide-linked. Cu cation serves as cofactor. Requires Ca(2+) as cofactor. L-topaquinone is required as a cofactor. In terms of processing, topaquinone (TPQ) is generated by copper-dependent autoxidation of a specific tyrosyl residue.

The protein operates within mycotoxin biosynthesis. Functionally, copper amine oxidase, part of the gene cluster that mediates the biosynthesis of the secondary metabolite victorin, the molecular basis for Victoria blight of oats. Within the pathway, vicK1 catalyzes the oxidative deamination of the N-terminal glycyl moiety of the hexapeptides in order to produce the active glyoxylate form victorins. The pathway starts with the processing of the precursor vicA1 by several endopeptidases including kexin proteases as well as the cluster-specific S28 family peptidases vicPa and vicPb to produce 7 identical copies of the hexapeptide Gly-Leu-Lys-Leu-Ala-Phe. After being excised from the precursor peptide, the core peptides are cyclized and modified post-translationally by enzymes encoded within the gene cluster. The ustYa family oxidase vicYb is required for the formation of the macrocycle in victorin and the copper amine oxidases (CAOs) vicK1 and vicK2 are responsible for converting victorin to the active form by oxidizing the N-terminal glycyl residue in the peptides to glyoxylate. Relaxed substrate specificity of enzymes in the victorin biosynthetic pathway results in a metabolic grid that produces a set of analogs including victorinines B, C, E or HV-toxin M. This Bipolaris victoriae (strain FI3) (Victoria blight of oats agent) protein is Copper amine oxidase vicK1.